Reading from the N-terminus, the 446-residue chain is Eukaryotic translation initiation factor 3 subunit E (446 aa).

Positions 240–420 (PLFNDENSRE…GTVVMNHPNS (181 aa)) constitute a PCI domain.

This sequence belongs to the eIF-3 subunit E family. As to quaternary structure, component of the eukaryotic translation initiation factor 3 (eIF-3) complex.

It localises to the cytoplasm. Component of the eukaryotic translation initiation factor 3 (eIF-3) complex, which is involved in protein synthesis of a specialized repertoire of mRNAs and, together with other initiation factors, stimulates binding of mRNA and methionyl-tRNAi to the 40S ribosome. The eIF-3 complex specifically targets and initiates translation of a subset of mRNAs involved in cell proliferation. In Pyricularia oryzae (strain 70-15 / ATCC MYA-4617 / FGSC 8958) (Rice blast fungus), this protein is Eukaryotic translation initiation factor 3 subunit E.